The primary structure comprises 134 residues: ATP synthase epsilon chain (134 aa).

The protein belongs to the ATPase epsilon chain family. As to quaternary structure, F-type ATPases have 2 components, CF(1) - the catalytic core - and CF(0) - the membrane proton channel. CF(1) has five subunits: alpha(3), beta(3), gamma(1), delta(1), epsilon(1). CF(0) has three main subunits: a, b and c.

It localises to the cell membrane. In terms of biological role, produces ATP from ADP in the presence of a proton gradient across the membrane. The sequence is that of ATP synthase epsilon chain from Clostridium botulinum (strain Alaska E43 / Type E3).